Here is a 151-residue protein sequence, read N- to C-terminus: Deoxyuridine 5'-triphosphate nucleotidohydrolase (151 aa).

Substrate is bound by residues 70 to 72 (RSG), N83, 87 to 89 (LID), and M97.

The protein belongs to the dUTPase family. It depends on Mg(2+) as a cofactor.

The catalysed reaction is dUTP + H2O = dUMP + diphosphate + H(+). Its pathway is pyrimidine metabolism; dUMP biosynthesis; dUMP from dCTP (dUTP route): step 2/2. In terms of biological role, this enzyme is involved in nucleotide metabolism: it produces dUMP, the immediate precursor of thymidine nucleotides and it decreases the intracellular concentration of dUTP so that uracil cannot be incorporated into DNA. The protein is Deoxyuridine 5'-triphosphate nucleotidohydrolase of Shigella sonnei (strain Ss046).